Consider the following 482-residue polypeptide: tRNA sulfurtransferase (482 aa).

A THUMP domain is found at Lys61–Arg165. Residues Leu183 to Ile184, Lys265, Gly287, and Gln296 each bind ATP. A disulfide bond links Cys344 and Cys456. Residues Val404 to Pro482 form the Rhodanese domain. Cys456 functions as the Cysteine persulfide intermediate in the catalytic mechanism.

The protein belongs to the ThiI family.

The protein resides in the cytoplasm. The catalysed reaction is [ThiI sulfur-carrier protein]-S-sulfanyl-L-cysteine + a uridine in tRNA + 2 reduced [2Fe-2S]-[ferredoxin] + ATP + H(+) = [ThiI sulfur-carrier protein]-L-cysteine + a 4-thiouridine in tRNA + 2 oxidized [2Fe-2S]-[ferredoxin] + AMP + diphosphate. The enzyme catalyses [ThiS sulfur-carrier protein]-C-terminal Gly-Gly-AMP + S-sulfanyl-L-cysteinyl-[cysteine desulfurase] + AH2 = [ThiS sulfur-carrier protein]-C-terminal-Gly-aminoethanethioate + L-cysteinyl-[cysteine desulfurase] + A + AMP + 2 H(+). It participates in cofactor biosynthesis; thiamine diphosphate biosynthesis. In terms of biological role, catalyzes the ATP-dependent transfer of a sulfur to tRNA to produce 4-thiouridine in position 8 of tRNAs, which functions as a near-UV photosensor. Also catalyzes the transfer of sulfur to the sulfur carrier protein ThiS, forming ThiS-thiocarboxylate. This is a step in the synthesis of thiazole, in the thiamine biosynthesis pathway. The sulfur is donated as persulfide by IscS. This chain is tRNA sulfurtransferase, found in Vibrio atlanticus (strain LGP32) (Vibrio splendidus (strain Mel32)).